We begin with the raw amino-acid sequence, 821 residues long: Leucine--tRNA ligase (821 aa).

A 'HIGH' region motif is present at residues 42–52 (PYPSGKLHMGH). The short motif at 583–587 (KMSKS) is the 'KMSKS' region element. K586 is a binding site for ATP.

Belongs to the class-I aminoacyl-tRNA synthetase family.

The protein localises to the cytoplasm. The catalysed reaction is tRNA(Leu) + L-leucine + ATP = L-leucyl-tRNA(Leu) + AMP + diphosphate. In Carboxydothermus hydrogenoformans (strain ATCC BAA-161 / DSM 6008 / Z-2901), this protein is Leucine--tRNA ligase.